A 118-amino-acid polypeptide reads, in one-letter code: T cell receptor gamma variable 2 (118 aa).

An N-terminal signal peptide occupies residues 1–17 (MQWALAVLLAFLSPASQ). The Ig-like domain maps to 18–118 (KSSNLEGRTK…GVYYCATWDG (101 aa)). The cysteines at positions 41 and 113 are disulfide-linked.

Gamma-delta TR is a heterodimer composed of a gamma and delta chain; disulfide-linked. The gamma-delta TR is associated with the transmembrane signaling CD3 coreceptor proteins following the stoichiometry: a single gamma-delta TR heterodimer associates with one CD3D-CD3E heterodimer, one CD3G-CD3E heterodimer and one CD247 homodimer forming a stable octameric structure. Upon activation, gamma-delta TR complex associates with FCER1G to initiate intracellular signaling.

Its subcellular location is the cell membrane. Its function is as follows. V region of the variable domain of T cell receptor (TR) gamma chain that participates in the antigen recognition. Gamma-delta TRs recognize a variety of self and foreign non-peptide antigens frequently expressed at the epithelial boundaries between the host and external environment, including endogenous lipids presented by MH-like protein CD1D and phosphoantigens presented by butyrophilin-like molecule BTN3A1. Upon antigen recognition induces rapid, innate-like immune responses involved in pathogen clearance and tissue repair. Binding of gamma-delta TR complex to antigen triggers phosphorylation of immunoreceptor tyrosine-based activation motifs (ITAMs) in the CD3 chains by the LCK and FYN kinases, allowing the recruitment, phosphorylation, and activation of ZAP70 that facilitates phosphorylation of the scaffolding proteins LCP2 and LAT. This lead to the formation of a supramolecular signalosome that recruits the phospholipase PLCG1, resulting in calcium mobilization and ERK activation, ultimately leading to T cell expansion and differentiation into effector cells. Gamma-delta TRs are produced through somatic rearrangement of a limited repertoire of variable (V), diversity (D), and joining (J) genes. The potential diversity of gamma-delta TRs is conferred by the unique ability to rearrange (D) genes in tandem and to utilize all three reading frames. The combinatorial diversity is considerably increased by the sequence exonuclease trimming and random nucleotide (N) region additions which occur during the V-(D)-J rearrangements. In Homo sapiens (Human), this protein is T cell receptor gamma variable 2.